We begin with the raw amino-acid sequence, 152 residues long: Spermine/spermidine N(1)-acetyltransferase (152 aa).

The N-acetyltransferase domain maps to Ile3 to Leu152. Acetyl-CoA-binding positions include Phe82 to Ile84, Gln89 to Lys95, and Asn122 to Arg131. Tyr129 serves as the catalytic Proton donor.

The protein belongs to the acetyltransferase family.

It carries out the reaction an alkane-alpha,omega-diamine + acetyl-CoA = an N-acetylalkane-alpha,omega-diamine + CoA + H(+). It catalyses the reaction spermine + acetyl-CoA = N(1)-acetylspermine + CoA + H(+). The enzyme catalyses spermidine + acetyl-CoA = N(1)-acetylspermidine + CoA + H(+). Its pathway is amine and polyamine degradation; spermine degradation. It functions in the pathway amine and polyamine degradation; spermidine degradation. Its activity is regulated as follows. Putrescine and N(8)-acetylspermidine are competitive inhibitors of spermidine acetylation. In terms of biological role, acetylates both spermidine and spermine at primary propyl amine moieties, with spermine being the preferred substrate. The polypeptide is Spermine/spermidine N(1)-acetyltransferase (bltD) (Bacillus subtilis (strain 168)).